The chain runs to 154 residues: UPF0178 protein ABC1688 (154 aa).

It belongs to the UPF0178 family.

The sequence is that of UPF0178 protein ABC1688 from Shouchella clausii (strain KSM-K16) (Alkalihalobacillus clausii).